The sequence spans 798 residues: Cold shock domain-containing protein E1 (798 aa).

Residues 26–87 (ETGVIEKLLT…RTGKPIAIKL (62 aa)) form the CSD 1 domain. N6-acetyllysine is present on Lys81. A Glycyl lysine isopeptide (Lys-Gly) (interchain with G-Cter in SUMO2) cross-link involves residue Lys91. Position 123 is a phosphoserine (Ser123). A CSD 2; truncated domain is found at 136-179 (VFYLTYTSEDVEGNVQLETGDKINFVIDNNKHTGAVSARNIMLL). Residues 186–245 (CQGVVCAMKEAFGFIERGDVVKEIFFHYSEFKGDLETLQPGDDVEFTIKDRNGKEVATDV) form the CSD 3 domain. Ser276 bears the Phosphoserine mark. One can recognise a CSD 4; truncated domain in the interval 297–337 (LPFGDKDTKSKVTLLEGDHVRFNISTDRRDKLERATNIEVL). CSD domains follow at residues 349 to 410 (EMGV…AIRI) and 447 to 507 (NKGK…ATCV). Ser514 is modified (phosphoserine). Residues 519–579 (LLGYVATLKD…KGNKVSAEKV (61 aa)) form the CSD 7 domain. At Ser584 the chain carries Phosphoserine. CSD domains follow at residues 610–670 (PTQI…AYNI) and 674–735 (RRAT…ACNV). One can recognise an SUZ-C domain in the interval 748-789 (PRPDRLVNRLKNITLDDASAPRLMVLRQPRGPDNSMGFGAER). Thr761 carries the post-translational modification Phosphothreonine.

This sequence belongs to the UNR family. In terms of assembly, component of a multi subunit autoregulatory ribonucleoprotein complex (ARC), at least composed of IGF2BP1, PABPC1 and CSDE1. Interacts with STRAP. Part of a complex associated with the FOS mCRD domain and consisting of PABPC1, PAIP1, HNRPD and SYNCRIP. The interaction with PABPC1 is direct and RNA-independent. Interacts with EIF4ENIF1/4E-T.

The protein localises to the cytoplasm. It is found in the stress granule. The protein resides in the P-body. RNA-binding protein involved in translationally coupled mRNA turnover. Implicated with other RNA-binding proteins in the cytoplasmic deadenylation/translational and decay interplay of the FOS mRNA mediated by the major coding-region determinant of instability (mCRD) domain. Required for efficient formation of stress granules. The protein is Cold shock domain-containing protein E1 of Mus musculus (Mouse).